Here is a 534-residue protein sequence, read N- to C-terminus: NEDD8-activating enzyme E1 regulatory subunit (534 aa).

At Ala2 the chain carries N-acetylalanine. An N6-acetyllysine mark is found at Lys6 and Lys341. The tract at residues Asp331–Asn344 is interaction with UBA3.

It belongs to the ubiquitin-activating E1 family. ULA1 subfamily. In terms of assembly, heterodimer of UBA3 and NAE1. The complex binds NEDD8 and UBE2M. Binds APP and TP53BP2. In terms of processing, ubiquitinated by TRIP12, leading to its degradation by the proteasome. As to expression, expressed throughout the brain. In hippocampus, strongly expressed in granule cells and in the pyramidal cell layer. Strongly expressed in the piriform cortex. In the cerebellum, expressed only in Purkinje cells.

It localises to the cell membrane. The protein operates within protein modification; protein neddylation. With respect to regulation, binding of TP53BP2 to the regulatory subunit NAE1 decreases neddylation activity. Functionally, regulatory subunit of the dimeric UBA3-NAE1 E1 enzyme. E1 activates NEDD8 by first adenylating its C-terminal glycine residue with ATP, thereafter linking this residue to the side chain of the catalytic cysteine, yielding a NEDD8-UBA3 thioester and free AMP. E1 finally transfers NEDD8 to the catalytic cysteine of UBE2M. Necessary for cell cycle progression through the S-M checkpoint. Overexpression of NAE1 causes apoptosis through deregulation of NEDD8 conjugation. The covalent attachment of NEDD8 to target proteins is known as 'neddylation' and the process is involved in the regulation of cell growth, viability and development. In Rattus norvegicus (Rat), this protein is NEDD8-activating enzyme E1 regulatory subunit (Nae1).